The sequence spans 291 residues: 6-deoxy-6-sulfogluconolactonase (291 aa).

A divalent metal cation contacts are provided by E17, N148, and D198. Residue D198 is the Proton donor/acceptor of the active site.

The protein belongs to the SMP-30/CGR1 family. It depends on a divalent metal cation as a cofactor.

It carries out the reaction 6-deoxy-6-sulfo-D-glucono-1,5-lactone + H2O = 6-deoxy-6-sulfo-D-gluconate + H(+). Functionally, catalyzes the hydrolysis of 6-deoxy-6-sulfo-D-glucono-1,5-lactone to form 6-deoxy-6-sulfo-D-gluconate. Is involved in a degradation pathway of sulfoquinovose (SQ) that allows P.putida SQ1 to use SQ as the sole carbon and energy source for growth. In Pseudomonas putida (Arthrobacter siderocapsulatus), this protein is 6-deoxy-6-sulfogluconolactonase.